The chain runs to 144 residues: 3-dehydroquinate dehydratase (144 aa).

Catalysis depends on Tyr23, which acts as the Proton acceptor. Residues Asn74, His80, and Asp87 each contribute to the substrate site. His101 functions as the Proton donor in the catalytic mechanism. Residues 102-103 (LS) and Arg112 each bind substrate.

It belongs to the type-II 3-dehydroquinase family. Homododecamer.

It carries out the reaction 3-dehydroquinate = 3-dehydroshikimate + H2O. The protein operates within metabolic intermediate biosynthesis; chorismate biosynthesis; chorismate from D-erythrose 4-phosphate and phosphoenolpyruvate: step 3/7. Its function is as follows. Catalyzes a trans-dehydration via an enolate intermediate. In Mesorhizobium japonicum (strain LMG 29417 / CECT 9101 / MAFF 303099) (Mesorhizobium loti (strain MAFF 303099)), this protein is 3-dehydroquinate dehydratase.